Reading from the N-terminus, the 639-residue chain is Tubulin--tyrosine ligase-like protein 12 (639 aa).

The region spanning 295–639 (PQGHVFRVHC…TDNCHVTRII (345 aa)) is the TTL domain. ATP contacts are provided by residues 445-448 (SKYI), lysine 463, and aspartate 465.

It belongs to the tubulin--tyrosine ligase family. In terms of assembly, interacts with MAVS; the interaction prevents MAVS binding to TBK1 and IKBKE. Interacts (via N-terminus) with TBK1 (via protein kinase domain). Interacts (via TTL domain) with IKBKE (via protein kinase domain). Interacts with tubulin alpha. Interacts with histone H3 and histone H4 (when trimethylated at 'Lys-20' (H4K20me3)). Interacts with CBX3. In terms of tissue distribution, widely expressed with highest levels in brain, kidney, liver, lung, muscle and testis.

Its subcellular location is the cytoplasm. The protein localises to the midbody. It is found in the cytoskeleton. The protein resides in the microtubule organizing center. It localises to the centrosome. Its subcellular location is the spindle. The protein localises to the nucleus. Negatively regulates post-translational modifications of tubulin, including detyrosination of the C-terminus and polyglutamylation of glutamate residues. Also, indirectly promotes histone H4 trimethylation at 'Lys-20' (H4K20me3). Probably by controlling tubulin and/or histone H4 post-translational modifications, plays a role in mitosis and in maintaining chromosome number stability. During RNA virus-mediated infection, acts as a negative regulator of the RIG-I pathway by preventing MAVS binding to TBK1 and IKBKE. The chain is Tubulin--tyrosine ligase-like protein 12 from Mus musculus (Mouse).